Consider the following 1081-residue polypeptide: MDGDADAVKSGRHGSGQACQICGDGVGTTAEGDVFAACDVCGFPVCRPCYEYERKDGTQACPQCKTKYKRHKGSPAIRGEEGEDTDADDVSDYNYPASGSADQKQKIADRMRSWRMNAGGGGDVGRPKYDSGEIGLTKYDSGEIPRGYIPSVTNSQISGEIPGASPDHHMMSPTGNIGKRAPFPYVNHSPNPSREFSGSIGNVAWKERVDGWKLKQDKGAIPMTNGTSIAPSEGRGVGDIDASTDYNMEDALLNDETRQPLSRKVPLPSSRINPYRMVIVLRLVVLSIFLHYRITNPVRNAYPLWLLSVICEIWFALSWILDQFPKWFPINRETYLDRLALRYDREGEPSQLAAVDIFVSTVDPMKEPPLVTANTVLSILAVDYPVDKVSCYVSDDGAAMLTFDALAETSEFARKWVPFVKKYNIEPRAPEWYFSQKIDYLKDKVHPSFVKDRRAMKREYEEFKVRINGLVAKAQKVPEEGWIMQDGTPWPGNNTRDHPGMIQVFLGHSGGLDTEGNELPRLVYVSREKRPGFQHHKKAGAMNALVRVSAVLTNGQYMLNLDCDHYINNSKALREAMCFLMDPNLGRSVCYVQFPQRFDGIDRNDRYANRNTVFFDINLRGLDGIQGPVYVGTGCVFNRTALYGYEPPIKQKKKGSFLSSLCGGRKKASKSKKKSSDKKKSNKHVDSAVPVFNLEDIEEGVEGAGFDDEKSLLMSQMSLEKRFGQSAAFVASTLMEYGGVPQSATPESLLKEAIHVISCGYEDKTEWGTEIGWIYGSVTEDILTGFKMHARGWRSIYCMPKRPAFKGSAPINLSDRLNQVLRWALGSVEILFSRHCPIWYGYGGRLKFLERFAYINTTIYPLTSIPLLIYCVLPAICLLTGKFIIPEISNFASIWFISLFISIFATGILEMRWSGVGIDEWWRNEQFWVIGGISAHLFAVFQGLLKVLAGIDTNFTVTSKASDEDGDFAELYMFKWTTLLIPPTTILIINLVGVVAGISYAINSGYQSWGPLFGKLFFAFWVIVHLYPFLKGLMGRQNRTPTIVVVWAILLASIFSLLWVRIDPFTTRVTGPDTQTCGINC.

Topologically, residues 1 to 277 (MDGDADAVKS…PSSRINPYRM (277 aa)) are cytoplasmic. Zn(2+)-binding residues include C19, C22, C38, C41, C46, C49, C61, and C64. Residues 19 to 65 (CQICGDGVGTTAEGDVFAACDVCGFPVCRPCYEYERKDGTQACPQCK) form an RING-type; degenerate zinc finger. Positions 72–148 (KGSPAIRGEE…YDSGEIPRGY (77 aa)) are disordered. Positions 81 to 91 (EGEDTDADDVS) are enriched in acidic residues. The span at 103-112 (QKQKIADRMR) shows a compositional bias: basic and acidic residues. Residues 278 to 298 (VIVLRLVVLSIFLHYRITNPV) form a helical membrane-spanning segment. Topologically, residues 299-300 (RN) are extracellular. The chain crosses the membrane as a helical span at residues 301–321 (AYPLWLLSVICEIWFALSWIL). Topologically, residues 322–864 (DQFPKWFPIN…INTTIYPLTS (543 aa)) are cytoplasmic. Positions 360, 366, 367, and 396 each coordinate UDP-alpha-D-glucose. D396 is an active-site residue. The stretch at 450-477 (VKDRRAMKREYEEFKVRINGLVAKAQKV) forms a coiled coil. UDP-alpha-D-glucose is bound at residue K537. Mn(2+) contacts are provided by K538 and D562. The disordered stretch occupies residues 660-684 (SLCGGRKKASKSKKKSSDKKKSNKH). Residues 664 to 682 (GRKKASKSKKKSSDKKKSN) show a composition bias toward basic residues. D781 is an active-site residue. A helical transmembrane segment spans residues 865 to 885 (IPLLIYCVLPAICLLTGKFII). At 886–890 (PEISN) the chain is on the extracellular side. The helical transmembrane segment at 891-911 (FASIWFISLFISIFATGILEM) threads the bilayer. Topologically, residues 912-926 (RWSGVGIDEWWRNEQ) are cytoplasmic. Residues 927-947 (FWVIGGISAHLFAVFQGLLKV) form a helical membrane-spanning segment. The Extracellular portion of the chain corresponds to 948–977 (LAGIDTNFTVTSKASDEDGDFAELYMFKWT). A glycan (N-linked (GlcNAc...) asparagine) is linked at N954. A helical membrane pass occupies residues 978–998 (TLLIPPTTILIINLVGVVAGI). Residues 999 to 1009 (SYAINSGYQSW) lie on the Cytoplasmic side of the membrane. The chain crosses the membrane as a helical span at residues 1010–1030 (GPLFGKLFFAFWVIVHLYPFL). The Extracellular segment spans residues 1031–1039 (KGLMGRQNR). A helical transmembrane segment spans residues 1040–1060 (TPTIVVVWAILLASIFSLLWV). Residues 1061 to 1081 (RIDPFTTRVTGPDTQTCGINC) are Cytoplasmic-facing.

It belongs to the glycosyltransferase 2 family. Plant cellulose synthase subfamily. Mn(2+) is required as a cofactor. The cofactor is Zn(2+).

It is found in the cell membrane. The enzyme catalyses [(1-&gt;4)-beta-D-glucosyl](n) + UDP-alpha-D-glucose = [(1-&gt;4)-beta-D-glucosyl](n+1) + UDP + H(+). It functions in the pathway glycan metabolism; plant cellulose biosynthesis. Functionally, probable catalytic subunit of cellulose synthase terminal complexes ('rosettes'), required for beta-1,4-glucan microfibril crystallization, a major mechanism of the cell wall formation. The chain is Probable cellulose synthase A catalytic subunit 8 [UDP-forming] (CESA8) from Oryza sativa subsp. japonica (Rice).